A 188-amino-acid chain; its full sequence is Putative manganese efflux pump MntP (188 aa).

A run of 6 helical transmembrane segments spans residues 2–22 (IMGN…AFAV), 39–59 (LITG…GFLL), 67–87 (ITAI…LNMI), 107–127 (IILS…FAFL), 129–149 (VDIV…SFLG), and 166–186 (LAGG…HLGF).

This sequence belongs to the MntP (TC 9.B.29) family.

The protein resides in the cell membrane. Its function is as follows. Probably functions as a manganese efflux pump. The sequence is that of Putative manganese efflux pump MntP from Desulfitobacterium hafniense (strain Y51).